Here is a 246-residue protein sequence, read N- to C-terminus: Flavin-dependent thymidylate synthase (246 aa).

The ThyX domain maps to valine 17–asparagine 241. Residues serine 69, arginine 92–arginine 94, and glutamate 101 contribute to the FAD site. Residues glutamate 89–arginine 92, glutamate 101–arginine 105, and arginine 173 contribute to the dUMP site. Residues arginine 92–serine 103 carry the ThyX motif motif. FAD is bound by residues asparagine 189–arginine 191 and histidine 195. Arginine 200 is a binding site for dUMP. Arginine 200 functions as the Involved in ionization of N3 of dUMP, leading to its activation in the catalytic mechanism.

The protein belongs to the thymidylate synthase ThyX family. Homotetramer. FAD serves as cofactor.

The enzyme catalyses dUMP + (6R)-5,10-methylene-5,6,7,8-tetrahydrofolate + NADPH + H(+) = dTMP + (6S)-5,6,7,8-tetrahydrofolate + NADP(+). It participates in pyrimidine metabolism; dTTP biosynthesis. Its function is as follows. Catalyzes the reductive methylation of 2'-deoxyuridine-5'-monophosphate (dUMP) to 2'-deoxythymidine-5'-monophosphate (dTMP) while utilizing 5,10-methylenetetrahydrofolate (mTHF) as the methyl donor, and NADPH and FADH(2) as the reductant. This is Flavin-dependent thymidylate synthase from Streptomyces avermitilis (strain ATCC 31267 / DSM 46492 / JCM 5070 / NBRC 14893 / NCIMB 12804 / NRRL 8165 / MA-4680).